We begin with the raw amino-acid sequence, 119 residues long: MARVKRAVNARKNHKKVLKLAKGYYGGKSKLFKTANESVIRALRNAYVGRRLKKRDYRRLWIARINAATRMNGLSYSRFMNGMKLAGVDINRKMLSEIAINDPKAFADLVELAKKHLNA.

The protein belongs to the bacterial ribosomal protein bL20 family.

In terms of biological role, binds directly to 23S ribosomal RNA and is necessary for the in vitro assembly process of the 50S ribosomal subunit. It is not involved in the protein synthesizing functions of that subunit. This chain is Large ribosomal subunit protein bL20, found in Clostridium perfringens (strain ATCC 13124 / DSM 756 / JCM 1290 / NCIMB 6125 / NCTC 8237 / Type A).